The sequence spans 347 residues: 4-hydroxy-2-oxovalerate aldolase 1 (347 aa).

Positions 8 to 261 constitute a Pyruvate carboxyltransferase domain; it reads VTLYDMSLLX…ETGIDLYKIM (254 aa). Histidine 20 acts as the Proton acceptor in catalysis. Substrate contacts are provided by serine 171 and histidine 200. The Mn(2+) site is built by histidine 200 and histidine 202. Tyrosine 291 contributes to the substrate binding site.

It belongs to the 4-hydroxy-2-oxovalerate aldolase family.

It catalyses the reaction (S)-4-hydroxy-2-oxopentanoate = acetaldehyde + pyruvate. In Metapseudomonas furukawaii (Pseudomonas furukawaii), this protein is 4-hydroxy-2-oxovalerate aldolase 1 (salH).